Consider the following 500-residue polypeptide: Glycerol kinase (500 aa).

Residue T13 coordinates ADP. Positions 13, 14, and 15 each coordinate ATP. T13 is a sn-glycerol 3-phosphate binding site. R17 contributes to the ADP binding site. The sn-glycerol 3-phosphate site is built by R83, E84, Y135, and D245. The glycerol site is built by R83, E84, Y135, D245, and Q246. ADP is bound by residues T267 and G310. The ATP site is built by T267, G310, Q314, and G411. Residues G411 and N415 each coordinate ADP.

This sequence belongs to the FGGY kinase family. As to quaternary structure, homotetramer and homodimer (in equilibrium).

It carries out the reaction glycerol + ATP = sn-glycerol 3-phosphate + ADP + H(+). It functions in the pathway polyol metabolism; glycerol degradation via glycerol kinase pathway; sn-glycerol 3-phosphate from glycerol: step 1/1. Its activity is regulated as follows. Activated by phosphorylation and inhibited by fructose 1,6-bisphosphate (FBP). Its function is as follows. Key enzyme in the regulation of glycerol uptake and metabolism. Catalyzes the phosphorylation of glycerol to yield sn-glycerol 3-phosphate. This is Glycerol kinase from Lactobacillus acidophilus (strain ATCC 700396 / NCK56 / N2 / NCFM).